Consider the following 418-residue polypeptide: UDP-N-acetylglucosamine 1-carboxyvinyltransferase (418 aa).

22 to 23 (KN) lines the phosphoenolpyruvate pocket. R91 is a binding site for UDP-N-acetyl-alpha-D-glucosamine. C115 functions as the Proton donor in the catalytic mechanism. C115 is subject to 2-(S-cysteinyl)pyruvic acid O-phosphothioketal. UDP-N-acetyl-alpha-D-glucosamine contacts are provided by D305 and I327.

It belongs to the EPSP synthase family. MurA subfamily.

The protein localises to the cytoplasm. It catalyses the reaction phosphoenolpyruvate + UDP-N-acetyl-alpha-D-glucosamine = UDP-N-acetyl-3-O-(1-carboxyvinyl)-alpha-D-glucosamine + phosphate. It participates in cell wall biogenesis; peptidoglycan biosynthesis. Its function is as follows. Cell wall formation. Adds enolpyruvyl to UDP-N-acetylglucosamine. The polypeptide is UDP-N-acetylglucosamine 1-carboxyvinyltransferase (Aeromonas hydrophila subsp. hydrophila (strain ATCC 7966 / DSM 30187 / BCRC 13018 / CCUG 14551 / JCM 1027 / KCTC 2358 / NCIMB 9240 / NCTC 8049)).